The sequence spans 95 residues: Co-chaperonin GroES (95 aa).

This sequence belongs to the GroES chaperonin family. In terms of assembly, heptamer of 7 subunits arranged in a ring. Interacts with the chaperonin GroEL.

It is found in the cytoplasm. Functionally, together with the chaperonin GroEL, plays an essential role in assisting protein folding. The GroEL-GroES system forms a nano-cage that allows encapsulation of the non-native substrate proteins and provides a physical environment optimized to promote and accelerate protein folding. GroES binds to the apical surface of the GroEL ring, thereby capping the opening of the GroEL channel. The polypeptide is Co-chaperonin GroES (Rhizorhabdus wittichii (strain DSM 6014 / CCUG 31198 / JCM 15750 / NBRC 105917 / EY 4224 / RW1) (Sphingomonas wittichii)).